Here is a 66-residue protein sequence, read N- to C-terminus: Photosystem II reaction center protein J (66 aa).

The segment at 1-25 (MSGKKSPYPDGRIPDRNPDGTPAVP) is disordered. A helical transmembrane segment spans residues 37 to 57 (LWLVATAGGMAVLFVVGLFFY).

It belongs to the PsbJ family. As to quaternary structure, PSII is composed of 1 copy each of membrane proteins PsbA, PsbB, PsbC, PsbD, PsbE, PsbF, PsbH, PsbI, PsbJ, PsbK, PsbL, PsbM, PsbT, PsbX, PsbY, PsbZ, Psb30/Ycf12, peripheral proteins PsbO, CyanoQ (PsbQ), PsbU, PsbV and a large number of cofactors. It forms dimeric complexes.

The protein resides in the cellular thylakoid membrane. Functionally, one of the components of the core complex of photosystem II (PSII). PSII is a light-driven water:plastoquinone oxidoreductase that uses light energy to abstract electrons from H(2)O, generating O(2) and a proton gradient subsequently used for ATP formation. It consists of a core antenna complex that captures photons, and an electron transfer chain that converts photonic excitation into a charge separation. The chain is Photosystem II reaction center protein J from Synechococcus sp. (strain CC9605).